Reading from the N-terminus, the 201-residue chain is MVFIADYGAGNLRSVQKAFDYLGIPATVSSDPAKMAGCRKVVLPGVGAFGQAIEALDRLGFTDALSEHVDKGGHLFGICLGMQLMLSDSEEMGSHRGLGLIPGSVRHFQSDSDKIPQIGWNSIDLKQESVLFRGIADHSFFYFVHSYYCDPLEASSIASTTWFAGKNFCSAIEKNGIFAVQFHPEKSSEAGLQVLRNFAEC.

The 201-residue stretch at 1 to 201 (MVFIADYGAG…LQVLRNFAEC (201 aa)) folds into the Glutamine amidotransferase type-1 domain. Residue Cys79 is the Nucleophile of the active site. Residues His183 and Glu185 contribute to the active site.

Heterodimer of HisH and HisF.

It localises to the cytoplasm. The enzyme catalyses 5-[(5-phospho-1-deoxy-D-ribulos-1-ylimino)methylamino]-1-(5-phospho-beta-D-ribosyl)imidazole-4-carboxamide + L-glutamine = D-erythro-1-(imidazol-4-yl)glycerol 3-phosphate + 5-amino-1-(5-phospho-beta-D-ribosyl)imidazole-4-carboxamide + L-glutamate + H(+). The catalysed reaction is L-glutamine + H2O = L-glutamate + NH4(+). It participates in amino-acid biosynthesis; L-histidine biosynthesis; L-histidine from 5-phospho-alpha-D-ribose 1-diphosphate: step 5/9. IGPS catalyzes the conversion of PRFAR and glutamine to IGP, AICAR and glutamate. The HisH subunit catalyzes the hydrolysis of glutamine to glutamate and ammonia as part of the synthesis of IGP and AICAR. The resulting ammonia molecule is channeled to the active site of HisF. In Chlorobium luteolum (strain DSM 273 / BCRC 81028 / 2530) (Pelodictyon luteolum), this protein is Imidazole glycerol phosphate synthase subunit HisH.